Here is a 64-residue protein sequence, read N- to C-terminus: Large ribosomal subunit protein bL33c (64 aa).

It belongs to the bacterial ribosomal protein bL33 family.

It is found in the plastid. It localises to the cyanelle. The chain is Large ribosomal subunit protein bL33c (rpl33) from Cyanophora paradoxa.